The following is a 261-amino-acid chain: Thioesterase AMT4 (261 aa).

This sequence belongs to the AMT4 thioesterase family.

It functions in the pathway mycotoxin biosynthesis. In terms of biological role, thioesterase; part of the gene clusters that mediate the biosynthesis of AM-toxins, host-selective toxins (HSTs) causing Alternaria blotch on apple, a worldwide distributed disease. AM-toxins are cyclic depsipeptides containing the 3 residues 2-hydroxy-isovaleric acid (2-HIV), dehydroalanine, L-alanine which are common for all 3 AM-toxins I to III. The fourth precursor is L-alpha-amino-methoxyphenyl-valeric acid (L-Amv) for AM-toxin I, L-alpha-amino-phenyl-valeric acid (L-Apv) for AM-toxin II, and L-alpha-amino-hydroxyphenyl-valeric acid (L-Ahv) for AM-toxin III. AM-toxins have two target sites for affecting susceptible apple cells; they cause invagination of the plasma membrane and electrolyte loss and chloroplast disorganization. The non-ribosomal peptide synthetase AMT1 contains 4 catalytic modules and is responsible for activation of each residue in AM-toxin. The aldo-keto reductase AMT2 catalyzes the conversion of 2-keto-isovaleric acid (2-KIV) to 2-hydroxy-isovaleric acid (2-HIV), one of the precursor residues incorporated by AMT1 during AM-toxin biosynthesis, by reduction of its ketone to an alcohol. The cytochrome P450 monooxygenase AMT3 and the thioesterase AMT4 are also important for AM-toxin production, but their exact function within the AM-toxin biosynthesis are not known yet. Up to 21 proteins (including AMT1 to AMT4) are predicted to be involved in AM-toxin biosynthesis since their expression ishighly up-regulated in AM-toxin-producing cultures. The chain is Thioesterase AMT4 from Alternaria alternata (Alternaria rot fungus).